A 386-amino-acid chain; its full sequence is Small ribosomal subunit protein mS31 (386 aa).

It belongs to the mitochondrion-specific ribosomal protein mS31 family. Component of the mitochondrial ribosome small subunit (28S) which comprises a 12S rRNA and about 30 distinct proteins.

The protein resides in the mitochondrion. This is Small ribosomal subunit protein mS31 (MRPS31) from Bos taurus (Bovine).